A 978-amino-acid chain; its full sequence is Transcription factor MYCGRDRAFT_87993 (978 aa).

2 C2H2-type zinc fingers span residues 2-24 (VFCT…ILTH) and 30-52 (FKCF…YTVH). The segment at residues 79–105 (CSNCAKTKTKCDKKFPCSRCAGRNLRC) is a DNA-binding region (zn(2)-C6 fungal-type). Disordered regions lie at residues 113 to 231 (ASKN…SPRF) and 426 to 445 (THRE…PSGA). Residues 152-165 (SSSPSSQKSGTPIS) are compositionally biased toward low complexity. The span at 432-445 (GTSNGSHSPNPSGA) shows a compositional bias: polar residues.

It localises to the nucleus. In terms of biological role, transcription factor; part of the gene cluster 29 that mediates the biosynthesis of dihydroxynaphthalene (DHN)-melanin, a bluish-green pigment forming a dark layer in the conidial wall that protects the conidia from UV radiations. This chain is Transcription factor MYCGRDRAFT_87993, found in Zymoseptoria tritici (strain CBS 115943 / IPO323) (Speckled leaf blotch fungus).